Here is a 1439-residue protein sequence, read N- to C-terminus: Probable histone acetyltransferase HAC-like 2 (1439 aa).

Disordered stretches follow at residues 1 to 43 and 313 to 335; these read MKQG…ASAD and YGISPNKPLQRHVNPSTRSTPTP. The span at 325-335 shows a compositional bias: polar residues; sequence VNPSTRSTPTP. Residues 607–687 form a TAZ-type zinc finger; that stretch reads ENTKQYHAQA…NEHCHVCCKA (81 aa). The PHD-type; degenerate zinc finger occupies 827-933; it reads KIHCHVQQET…EYTCFKCYIE (107 aa). One can recognise a CBP/p300-type HAT domain in the interval 948-1383; the sequence is VRGAKDLPRT…MLYHLHNPTG (436 aa). A coiled-coil region spans residues 964–989; the sequence is EERLFKRLREERQERANKLKTSLDEV. Acetyl-CoA contacts are provided by residues 1071-1073, 1090-1091, and Trp-1146; these read LDS and RT. The ZZ-type zinc-finger motif lies at 1265–1328; the sequence is HLQYSCSHCC…ILHPVEIVGV (64 aa). Cys-1270, Cys-1273, Cys-1285, Cys-1288, Cys-1294, Cys-1297, His-1310, and His-1318 together coordinate Zn(2+).

The protein resides in the nucleus. It carries out the reaction L-lysyl-[protein] + acetyl-CoA = N(6)-acetyl-L-lysyl-[protein] + CoA + H(+). Its function is as follows. Acetyltransferase enzyme. Acetylates histones, giving a specific tag for transcriptional activation. The polypeptide is Probable histone acetyltransferase HAC-like 2 (Oryza sativa subsp. japonica (Rice)).